The chain runs to 346 residues: Structure-specific endonuclease subunit SLX1 (346 aa).

A GIY-YIG domain is found at 22-105; it reads DFYGVYLLRS…QHPYQTRHIK (84 aa). The SLX1-type zinc finger occupies 216–306; it reads CFICNETIDY…TPLQGKCLSC (91 aa).

Belongs to the SLX1 family. As to quaternary structure, forms a heterodimer with SLX4. Requires a divalent metal cation as cofactor.

Its subcellular location is the nucleus. Its function is as follows. Catalytic subunit of the SLX1-SLX4 structure-specific endonuclease that resolves DNA secondary structures generated during DNA repair and recombination. Has endonuclease activity towards branched DNA substrates, introducing single-strand cuts in duplex DNA close to junctions with ss-DNA. This is Structure-specific endonuclease subunit SLX1 from Debaryomyces hansenii (strain ATCC 36239 / CBS 767 / BCRC 21394 / JCM 1990 / NBRC 0083 / IGC 2968) (Yeast).